A 341-amino-acid chain; its full sequence is uncharacterized protein (341 aa).

This is an uncharacterized protein from Treponema pallidum (strain Nichols).